The following is a 366-amino-acid chain: Protein RecA (366 aa).

Position 77–84 (77–84) interacts with ATP; that stretch reads GPESSGKT. The disordered stretch occupies residues 346-366; the sequence is IGGPGGEDDDAGGAAGVGDEA.

The protein belongs to the RecA family.

The protein localises to the cytoplasm. Functionally, can catalyze the hydrolysis of ATP in the presence of single-stranded DNA, the ATP-dependent uptake of single-stranded DNA by duplex DNA, and the ATP-dependent hybridization of homologous single-stranded DNAs. It interacts with LexA causing its activation and leading to its autocatalytic cleavage. The sequence is that of Protein RecA from Rhodospirillum rubrum (strain ATCC 11170 / ATH 1.1.1 / DSM 467 / LMG 4362 / NCIMB 8255 / S1).